The chain runs to 117 residues: Structural toxin peptide sea anemone type 9a (117 aa).

A signal peptide spans 1–23 (MKTIIAIFSLAAMIVLVRPTPLE). 3 tandem repeats follow at residues 28–56 (TRSI…GCQE), 57–88 (KRNI…NEAV), and 89–117 (KRAI…HGCS). The tract at residues 29-117 (RSIINVPCKK…GKCRKIHGCS (89 aa)) is 3 X approximate tandem repeats.

Contains 6 disulfide bonds. In terms of tissue distribution, expressed outside of acontia.

The protein resides in the secreted. The protein localises to the nematocyst. Its function is as follows. Putative neurotoxin. The sequence is that of Structural toxin peptide sea anemone type 9a from Calliactis polypus (Hermit crab anemone).